The chain runs to 354 residues: MTLLKNDTFLRALLKQPVEYTPIWMMRQAGRYLPEYKATRAKAGSFLDLCKNTELATEVTIQPLERFDLDAAILFSDILTVPDAMGLGLYFAEGEGPKFKRALQHEDDIAKLHVPDMEKLQYVFDAVTSIRKALDGRVPLIGFSGSPFTLACYMVEGGSSKEFRTIKTMMYSRPDLLHKILDTNAQAVTAYLNAQIDAGAQAVQIFDTWGGVLSDAAFKEFSLKYIRQIVAGLKRESEGRRVPVIVFAKGGGLWLESMAEIGADALGLDWTCNIGEARRRVGKQVALQGNFDPFALFGTPESIRTEVARILADYGHGSGHVFNLGHGINQHADPEHAKILVDTVHELSRQYHGG.

Residues Arg-27–Arg-31, Asp-77, Tyr-153, Thr-208, and His-326 each bind substrate.

The protein belongs to the uroporphyrinogen decarboxylase family. As to quaternary structure, homodimer.

It localises to the cytoplasm. The catalysed reaction is uroporphyrinogen III + 4 H(+) = coproporphyrinogen III + 4 CO2. Its pathway is porphyrin-containing compound metabolism; protoporphyrin-IX biosynthesis; coproporphyrinogen-III from 5-aminolevulinate: step 4/4. Functionally, catalyzes the decarboxylation of four acetate groups of uroporphyrinogen-III to yield coproporphyrinogen-III. The sequence is that of Uroporphyrinogen decarboxylase from Neisseria meningitidis serogroup C (strain 053442).